Consider the following 799-residue polypeptide: Cadherin-8 (799 aa).

A signal peptide spans 1–29 (MPERLAETLMDLWTPLIILWITLPSCVYT). Residues 30–61 (APMNQAHVLTTGSPLELSRQSEDMRILSRSKR) constitute a propeptide that is removed on maturation. 5 Cadherin domains span residues 62–167 (GWVW…APEF), 168–276 (LNGP…PPKF), 277–391 (AQSL…PPVF), 392–494 (SSPT…DNAP), and 495–616 (EFAS…YVLP). Topologically, residues 62–621 (GWVWNQMFVL…AYVLPIGLSM (560 aa)) are extracellular. The N-linked (GlcNAc...) asparagine glycan is linked to N188. N463, N473, and N544 each carry an N-linked (GlcNAc...) asparagine glycan. Residues 622–642 (GALIAILACIILLLVIVVLFV) traverse the membrane as a helical segment. Topologically, residues 643–799 (TLRRHKNEPL…YSVGESDKET (157 aa)) are cytoplasmic. S795 carries the post-translational modification Phosphoserine.

The protein localises to the cell membrane. Its function is as follows. Cadherins are calcium-dependent cell adhesion proteins. They preferentially interact with themselves in a homophilic manner in connecting cells; cadherins may thus contribute to the sorting of heterogeneous cell types. This is Cadherin-8 (Cdh8) from Mus musculus (Mouse).